We begin with the raw amino-acid sequence, 130 residues long: Small ribosomal subunit protein uS9 (130 aa).

Belongs to the universal ribosomal protein uS9 family.

This is Small ribosomal subunit protein uS9 from Herminiimonas arsenicoxydans.